Consider the following 496-residue polypeptide: Glutamate--tRNA ligase (496 aa).

The 'HIGH' region signature appears at P12–N22. The 'KMSKS' region signature appears at K259–R263. Residue K262 coordinates ATP.

The protein belongs to the class-I aminoacyl-tRNA synthetase family. Glutamate--tRNA ligase type 1 subfamily. As to quaternary structure, monomer.

It localises to the cytoplasm. The catalysed reaction is tRNA(Glu) + L-glutamate + ATP = L-glutamyl-tRNA(Glu) + AMP + diphosphate. Functionally, catalyzes the attachment of glutamate to tRNA(Glu) in a two-step reaction: glutamate is first activated by ATP to form Glu-AMP and then transferred to the acceptor end of tRNA(Glu). In Lactiplantibacillus plantarum (strain ATCC BAA-793 / NCIMB 8826 / WCFS1) (Lactobacillus plantarum), this protein is Glutamate--tRNA ligase.